The chain runs to 733 residues: Nuclear hormone receptor family member nhr-66 (733 aa).

Composition is skewed to low complexity over residues 113–130 (PAIPSSSSCSEPSTSQAS) and 165–185 (QQNRQQHQQQQRQQQQAQQQN). The disordered stretch occupies residues 113–190 (PAIPSSSSCS…AQQQNSMARK (78 aa)). The segment at residues 266–343 (VPACAICGTD…SGMDKNSVQH (78 aa)) is a DNA-binding region (nuclear receptor). 2 NR C4-type zinc fingers span residues 269 to 289 (CAICGTDSTGIHFGVDACAAC) and 305 to 326 (CNKGGKCTVVKDGSAGQKCRAC). A disordered region spans residues 361-396 (PDAEFEPSAKVSTVSEPSTSSGPSGGFNQNVSSPAG). Low complexity predominate over residues 371–382 (VSTVSEPSTSSG). The region spanning 444 to 687 (CLGDWFRKPS…ACFNQMLDVE (244 aa)) is the NR LBD domain. The AF-2 stretch occupies residues 676-687 (ADACFNQMLDVE). A disordered region spans residues 691 to 733 (VSPDGQKDSEAEQGPSPVSVPEAARGSYQDDDMPPVLEKNCDL).

This sequence belongs to the nuclear hormone receptor family. As to quaternary structure, interacts with nuclear hormone receptor nhr-49; the interaction is direct. Widely expressed, including in hypodermis, gut, muscle, and neuronal cells of the ventral nerve cord, head, and tail ganglia. Expressed in the head ganglion in several sensory and interneurons, including AVA.

Its subcellular location is the nucleus. In terms of biological role, transcription factor. Binds to regulatory elements and regulates transcription of target genes, including the potassium channel accessory subunit mps-2. Negatively regulates transcription of mps-2, thereby modulating age-dependent memory decline. In concert with nuclear hormone receptor nhr-49, involved in regulating target genes with roles in sphingolipid breakdown and lipid remodeling. Plays a role in modulating mitochondrial morphology and function. This chain is Nuclear hormone receptor family member nhr-66, found in Caenorhabditis elegans.